The primary structure comprises 581 residues: Leucine-rich repeat transmembrane neuronal protein 3 (581 aa).

A signal peptide spans 1-30 (MGFNVIRLLSGSAVALVIAPTVLLTMLSSA). An LRRNT domain is found at 31-61 (ERGCPKGCRCEGKMVYCESQKLQEIPSSISA). Residues 31-419 (ERGCPKGCRC…ADAEHISFHK (389 aa)) lie on the Extracellular side of the membrane. 10 LRR repeats span residues 63-83 (CLGLSLRYNSLQKLKYNQFKG), 86-107 (QLTWLYLDHNHISNIDENAFNG), 110-131 (RLKELILSSNRISYFLNNTFRP), 134-155 (NLRNLDLSYNQLHSLGSEQFRG), 158-179 (KLLSLHLRSNSLRTIPVRIFQD), 182-203 (NLELLDLGYNRIRSLARNVFAG), 206-226 (RLKELHLEHNQFSKLNLALFP), 230-251 (SLQNLYLQWNKISVIGQTMSWT), 254-275 (SLQRLDLSGNEIEAFSGPSVFQ), and 279-300 (NLQRLNLDSNKLTFIGQEILDS). N126 is a glycosylation site (N-linked (GlcNAc...) asparagine). Positions 312–363 (NIWECSRNICSLVNWLKSFKGLRENTIICASPKELQGVNVIDAVKNYSICGK) constitute an LRRCT domain. N357 is a glycosylation site (N-linked (GlcNAc...) asparagine). The segment at 377–408 (KPTFKPKLPRPKHESKPPLPPTVGATEPGPET) is disordered. Residues 420-440 (IIAGSVALFLSVLVILLVIYV) form a helical membrane-spanning segment. Topologically, residues 441 to 581 (SWKRYPASMK…RISDHKQQLA (141 aa)) are cytoplasmic.

The protein belongs to the LRRTM family. In terms of tissue distribution, expressed in neuronal tissues.

Its subcellular location is the cell membrane. It localises to the postsynaptic cell membrane. Exhibits a limited synaptogenic activity in vitro, restricted to excitatory presynaptic differentiation. May play a role in the development and maintenance of the vertebrate nervous system. This is Leucine-rich repeat transmembrane neuronal protein 3 (LRRTM3) from Homo sapiens (Human).